The sequence spans 377 residues: Opsin-5 (377 aa).

Over 1–33 (MALNHTALPQDERLPHYLRDEDPFASKLSWEAD) the chain is Extracellular. N4 carries an N-linked (GlcNAc...) asparagine glycan. Residues 34-54 (LVAGFYLTIIGILSTFGNGYV) traverse the membrane as a helical segment. Over 55-74 (LYMSSRRKKKLRPAEIMTIN) the chain is Cytoplasmic. The chain crosses the membrane as a helical span at residues 75–95 (LAVCDLGISVVGKPFTIISCF). The Extracellular portion of the chain corresponds to 96-108 (CHRWVFGWFGCRW). The cysteines at positions 106 and 183 are disulfide-linked. A helical transmembrane segment spans residues 109–129 (YGWAGFFFGCGSLITMTAVSL). Over 130–150 (DRYLKICYLSYGVWLKRKHAY) the chain is Cytoplasmic. A helical transmembrane segment spans residues 151–171 (ICLAVIWAYASFWTTMPLVGL). Topologically, residues 172–197 (GDYAPEPFGTSCTLDWWLAQASGGGQ) are extracellular. Residues 198 to 218 (VFILSILFFCLLLPTAVIVFS) traverse the membrane as a helical segment. The Cytoplasmic portion of the chain corresponds to 219–252 (YAKIIAKVKSSSKEVAHFDSRIHSSHVLEVKLTK). The helical transmembrane segment at 253–273 (VAMLICAGFLIAWIPYAVVSV) threads the bilayer. The Extracellular segment spans residues 274–288 (WSAFGRPDSIPIQLS). Residues 289-309 (VVPTLLAKSAAMYNPIIYQVI) form a helical membrane-spanning segment. At K296 the chain carries N6-(retinylidene)lysine. Residues 310-377 (DYRFACCQAG…HSNDGDCGKK (68 aa)) lie on the Cytoplasmic side of the membrane. S-palmitoyl cysteine attachment occurs at residues C315 and C316. Residues 357–377 (FTSAHVMDGESHSNDGDCGKK) are disordered. Basic and acidic residues predominate over residues 363–377 (MDGESHSNDGDCGKK).

Belongs to the G-protein coupled receptor 1 family. Opsin subfamily. It is uncertain whether Cys-315 or Cys-316 is palmitoylated. As to expression, expressed in the brain (at protein level). Weakly expressed in the skin and liver (at protein level). Abundantly expressed in striated muscle cells. Expressed in Math7/Atok7-dependent retinal ganglion cells in the ganglion cell layer (at protein level). Additionally expressed in horizontal and amacrine cells in the inner nuclear layer of the retina (at protein level). Expressed around the base of hair follicles and in epidermal and sebaceous gland cells of the outer ear (at protein level). Abundantly expressed in vibrissae hair follicles and weakly expressed in the vibrissae skin pad, dorsal back skin, and tail.

The protein resides in the cell membrane. Functionally, G-protein coupled receptor which selectively activates G(i) type G proteins via ultraviolet A (UVA) light-mediated activation in the retina. Preferentially binds the chromophore 11-cis retinal and is a bistable protein that displays emission peaks at 380 nm (UVA light) and 470 nm (blue light). Required for the light-response in the inner plexiform layer, and contributes to the regulation of the light-response in the nerve fiber layer, via phosphorylated DAT/SLC6A3 dopamine uptake. Involved in local corneal and retinal circadian rhythm photoentrainment via modulation of the UVA light-induced phase-shift of the retina clock. Acts as a circadian photoreceptor in the outer ear and vibrissal pads, via modulation of circadian clock-gene expression in response to violet light during the light-to-dark transition phase and night phase of the circadian cycle. Required in the retina to negatively regulate hyaloid vessel regression during postnatal development via light-dependent OPN5-SLC32A1-DRD2-VEGFR2 signaling. Involved in the light-dependent regulation of retina and vitreous compartment dopamine levels. This chain is Opsin-5 (Opn5), found in Mus musculus (Mouse).